The sequence spans 168 residues: SsrA-binding protein (168 aa).

Belongs to the SmpB family.

The protein resides in the cytoplasm. Functionally, required for rescue of stalled ribosomes mediated by trans-translation. Binds to transfer-messenger RNA (tmRNA), required for stable association of tmRNA with ribosomes. tmRNA and SmpB together mimic tRNA shape, replacing the anticodon stem-loop with SmpB. tmRNA is encoded by the ssrA gene; the 2 termini fold to resemble tRNA(Ala) and it encodes a 'tag peptide', a short internal open reading frame. During trans-translation Ala-aminoacylated tmRNA acts like a tRNA, entering the A-site of stalled ribosomes, displacing the stalled mRNA. The ribosome then switches to translate the ORF on the tmRNA; the nascent peptide is terminated with the 'tag peptide' encoded by the tmRNA and targeted for degradation. The ribosome is freed to recommence translation, which seems to be the essential function of trans-translation. The polypeptide is SsrA-binding protein (Mycobacterium sp. (strain JLS)).